A 359-amino-acid chain; its full sequence is 5-amino-6-(D-ribitylamino)uracil--L-tyrosine 4-hydroxyphenyl transferase (359 aa).

In terms of domain architecture, Radical SAM core spans 45-282 (VTYVVNANIN…TYAISRIFFK (238 aa)). Positions 59, 63, and 66 each coordinate [4Fe-4S] cluster.

The protein belongs to the radical SAM superfamily. CofH family. Consists of two subunits, CofG and CofH. [4Fe-4S] cluster is required as a cofactor.

It carries out the reaction 5-amino-6-(D-ribitylamino)uracil + L-tyrosine + S-adenosyl-L-methionine = 5-amino-5-(4-hydroxybenzyl)-6-(D-ribitylimino)-5,6-dihydrouracil + 2-iminoacetate + 5'-deoxyadenosine + L-methionine + H(+). It functions in the pathway cofactor biosynthesis; coenzyme F0 biosynthesis. In terms of biological role, catalyzes the radical-mediated synthesis of 5-amino-5-(4-hydroxybenzyl)-6-(D-ribitylimino)-5,6-dihydrouracil from 5-amino-6-(D-ribitylamino)uracil and L-tyrosine. This is 5-amino-6-(D-ribitylamino)uracil--L-tyrosine 4-hydroxyphenyl transferase from Methanococcus maripaludis (strain C5 / ATCC BAA-1333).